Reading from the N-terminus, the 944-residue chain is Translation initiation factor IF-2 (944 aa).

The tract at residues Ile61–Ile281 is disordered. Polar residues predominate over residues Thr132 to Ser150. The segment covering Gln151–Leu169 has biased composition (basic and acidic residues). Positions Ser175 to Asn185 are enriched in low complexity. Basic and acidic residues predominate over residues Ala186–His203. Basic residues predominate over residues Glu204–Ile215. Over residues Glu244–Lys259 the composition is skewed to basic and acidic residues. The tr-type G domain maps to Glu443–Lys612. A G1 region spans residues Gly452–Thr459. Gly452–Thr459 provides a ligand contact to GTP. The G2 stretch occupies residues Gly477–His481. A G3 region spans residues Asp498–Gly501. Residues Asp498 to His502 and Asn552 to Asp555 each bind GTP. Residues Asn552 to Asp555 form a G4 region. The tract at residues Ser588–Lys590 is G5.

It belongs to the TRAFAC class translation factor GTPase superfamily. Classic translation factor GTPase family. IF-2 subfamily.

Its subcellular location is the cytoplasm. In terms of biological role, one of the essential components for the initiation of protein synthesis. Protects formylmethionyl-tRNA from spontaneous hydrolysis and promotes its binding to the 30S ribosomal subunits. Also involved in the hydrolysis of GTP during the formation of the 70S ribosomal complex. The sequence is that of Translation initiation factor IF-2 from Helicobacter pylori (strain HPAG1).